The following is a 137-amino-acid chain: Large ribosomal subunit protein uL16 (137 aa).

Belongs to the universal ribosomal protein uL16 family. Part of the 50S ribosomal subunit.

Binds 23S rRNA and is also seen to make contacts with the A and possibly P site tRNAs. In Beijerinckia indica subsp. indica (strain ATCC 9039 / DSM 1715 / NCIMB 8712), this protein is Large ribosomal subunit protein uL16.